The primary structure comprises 205 residues: Adenylate kinase (205 aa).

Position 11 to 16 (11 to 16 (GSGKGT)) interacts with ATP. The segment at 31–60 (STGDIFRHNVKSMTPLGVEAKRYIDNGDFV) is NMP. AMP contacts are provided by residues Thr-32, Arg-37, 58–60 (DFV), 86–89 (GYPR), and Gln-93. Residues 127–137 (KRAEIEGRADD) are LID. Arg-128 contacts ATP. Residues Arg-134 and Arg-145 each coordinate AMP. ATP is bound at residue Gly-173.

The protein belongs to the adenylate kinase family. In terms of assembly, monomer.

Its subcellular location is the cytoplasm. It catalyses the reaction AMP + ATP = 2 ADP. Its pathway is purine metabolism; AMP biosynthesis via salvage pathway; AMP from ADP: step 1/1. In terms of biological role, catalyzes the reversible transfer of the terminal phosphate group between ATP and AMP. Plays an important role in cellular energy homeostasis and in adenine nucleotide metabolism. This is Adenylate kinase from Micrococcus luteus (strain ATCC 4698 / DSM 20030 / JCM 1464 / CCM 169 / CCUG 5858 / IAM 1056 / NBRC 3333 / NCIMB 9278 / NCTC 2665 / VKM Ac-2230) (Micrococcus lysodeikticus).